The chain runs to 90 residues: Small ribosomal subunit protein uS17 (90 aa).

Belongs to the universal ribosomal protein uS17 family. In terms of assembly, part of the 30S ribosomal subunit.

In terms of biological role, one of the primary rRNA binding proteins, it binds specifically to the 5'-end of 16S ribosomal RNA. This Burkholderia multivorans (strain ATCC 17616 / 249) protein is Small ribosomal subunit protein uS17.